The sequence spans 100 residues: NADH-quinone oxidoreductase subunit K (100 aa).

Helical transmembrane passes span L4 to I24, L28 to V48, and V60 to L80.

It belongs to the complex I subunit 4L family. In terms of assembly, NDH-1 is composed of 13 different subunits. Subunits NuoA, H, J, K, L, M, N constitute the membrane sector of the complex.

Its subcellular location is the cell inner membrane. The enzyme catalyses a quinone + NADH + 5 H(+)(in) = a quinol + NAD(+) + 4 H(+)(out). Its function is as follows. NDH-1 shuttles electrons from NADH, via FMN and iron-sulfur (Fe-S) centers, to quinones in the respiratory chain. The immediate electron acceptor for the enzyme in this species is believed to be ubiquinone. Couples the redox reaction to proton translocation (for every two electrons transferred, four hydrogen ions are translocated across the cytoplasmic membrane), and thus conserves the redox energy in a proton gradient. In Pectobacterium carotovorum subsp. carotovorum (strain PC1), this protein is NADH-quinone oxidoreductase subunit K.